The primary structure comprises 243 residues: tRNA1(Val) (adenine(37)-N6)-methyltransferase (243 aa).

This sequence belongs to the methyltransferase superfamily. tRNA (adenine-N(6)-)-methyltransferase family.

The protein resides in the cytoplasm. It catalyses the reaction adenosine(37) in tRNA1(Val) + S-adenosyl-L-methionine = N(6)-methyladenosine(37) in tRNA1(Val) + S-adenosyl-L-homocysteine + H(+). In terms of biological role, specifically methylates the adenine in position 37 of tRNA(1)(Val) (anticodon cmo5UAC). The polypeptide is tRNA1(Val) (adenine(37)-N6)-methyltransferase (Shewanella woodyi (strain ATCC 51908 / MS32)).